Here is a 591-residue protein sequence, read N- to C-terminus: Probable translation initiation factor IF-2 (591 aa).

Positions 7-223 constitute a tr-type G domain; sequence LRTPIVCVMG…LLGLAQKFLE (217 aa). A G1 region spans residues 16–23; sequence GHVDHGKT. 16–23 is a binding site for GTP; sequence GHVDHGKT. The G2 stretch occupies residues 41 to 45; that stretch reads AITQH. The G3 stretch occupies residues 78–81; the sequence is DTPG. GTP-binding positions include 78–82 and 132–135; these read DTPGH and NKID. Positions 132–135 are G4; that stretch reads NKID. Residues 200–202 are G5; it reads SAF.

It belongs to the TRAFAC class translation factor GTPase superfamily. Classic translation factor GTPase family. IF-2 subfamily.

Function in general translation initiation by promoting the binding of the formylmethionine-tRNA to ribosomes. Seems to function along with eIF-2. The polypeptide is Probable translation initiation factor IF-2 (Methanosarcina mazei (strain ATCC BAA-159 / DSM 3647 / Goe1 / Go1 / JCM 11833 / OCM 88) (Methanosarcina frisia)).